The primary structure comprises 169 residues: Positive control factor (169 aa).

The segment at residues 132–157 (YERIADLLGVKKSTVQTTIKRASLKM) is a DNA-binding region (H-T-H motif).

In terms of biological role, positive regulatory protein that acts at the late promoter PL. This chain is Positive control factor (xpf), found in Bacillus subtilis (strain 168).